The following is a 160-amino-acid chain: Phosphopantetheine adenylyltransferase (160 aa).

Threonine 10 is a substrate binding site. Residues 10–11 (TF) and histidine 18 each bind ATP. Residues lysine 42, leucine 74, and arginine 88 each coordinate substrate. ATP is bound by residues 89-91 (GLR), glutamate 99, and 124-130 (NSFISST).

Belongs to the bacterial CoaD family. As to quaternary structure, homohexamer. Mg(2+) is required as a cofactor.

It localises to the cytoplasm. The enzyme catalyses (R)-4'-phosphopantetheine + ATP + H(+) = 3'-dephospho-CoA + diphosphate. The protein operates within cofactor biosynthesis; coenzyme A biosynthesis; CoA from (R)-pantothenate: step 4/5. Functionally, reversibly transfers an adenylyl group from ATP to 4'-phosphopantetheine, yielding dephospho-CoA (dPCoA) and pyrophosphate. This Photobacterium damsela subsp. piscicida (Pasteurella piscicida) protein is Phosphopantetheine adenylyltransferase.